Reading from the N-terminus, the 118-residue chain is Probable non-functional immunoglobulin lambda variable 2-33 (118 aa).

The first 19 residues, 1–19 (MAWALLLLTLLTQGTGSWA), serve as a signal peptide directing secretion. The interval 20–44 (QSALTQPPFVSGAPGQSVTISCTGT) is framework-1. One can recognise an Ig-like domain in the interval 34–118 (GQSVTISCTG…CSLYSSSYTF (85 aa)). A disulfide bridge links Cys41 with Cys109. The tract at residues 45 to 53 (SSDVGDYDH) is complementarity-determining-1. Positions 54 to 70 (VFWYQKRLSTTSRLLIY) are framework-2. Positions 71-73 (NVN) are complementarity-determining-2. The segment at 74 to 109 (TRPSGISDLFSGSKSGNMASLTISGLKSEVEANYHC) is framework-3. The interval 110 to 118 (SLYSSSYTF) is complementarity-determining-3.

Immunoglobulins are composed of two identical heavy chains and two identical light chains; disulfide-linked.

It localises to the secreted. Its subcellular location is the cell membrane. In terms of biological role, probable non-functional open reading frame (ORF) of V region of the variable domain of immunoglobulin light chains. Non-functional ORF generally cannot participate in the synthesis of a productive immunoglobulin chain due to altered V-(D)-J or switch recombination and/or splicing site (at mRNA level) and/or conserved amino acid change (protein level). Immunoglobulins, also known as antibodies, are membrane-bound or secreted glycoproteins produced by B lymphocytes. In the recognition phase of humoral immunity, the membrane-bound immunoglobulins serve as receptors which, upon binding of a specific antigen, trigger the clonal expansion and differentiation of B lymphocytes into immunoglobulins-secreting plasma cells. Secreted immunoglobulins mediate the effector phase of humoral immunity, which results in the elimination of bound antigens. The antigen binding site is formed by the variable domain of one heavy chain, together with that of its associated light chain. Thus, each immunoglobulin has two antigen binding sites with remarkable affinity for a particular antigen. The variable domains are assembled by a process called V-(D)-J rearrangement and can then be subjected to somatic hypermutations which, after exposure to antigen and selection, allow affinity maturation for a particular antigen. This is Probable non-functional immunoglobulin lambda variable 2-33 from Homo sapiens (Human).